Reading from the N-terminus, the 324-residue chain is Acetyl-coenzyme A carboxylase carboxyl transferase subunit beta (324 aa).

The CoA carboxyltransferase N-terminal domain maps to 28–297; the sequence is LWCKCPSCNA…AVAPAAAKAP (270 aa). Residues C32, C35, C51, and C54 each contribute to the Zn(2+) site. A C4-type zinc finger spans residues 32 to 54; that stretch reads CPSCNAILYKSEVERNLEVCPKC.

This sequence belongs to the AccD/PCCB family. Acetyl-CoA carboxylase is a heterohexamer composed of biotin carboxyl carrier protein (AccB), biotin carboxylase (AccC) and two subunits each of ACCase subunit alpha (AccA) and ACCase subunit beta (AccD). Zn(2+) serves as cofactor.

Its subcellular location is the cytoplasm. The catalysed reaction is N(6)-carboxybiotinyl-L-lysyl-[protein] + acetyl-CoA = N(6)-biotinyl-L-lysyl-[protein] + malonyl-CoA. It participates in lipid metabolism; malonyl-CoA biosynthesis; malonyl-CoA from acetyl-CoA: step 1/1. In terms of biological role, component of the acetyl coenzyme A carboxylase (ACC) complex. Biotin carboxylase (BC) catalyzes the carboxylation of biotin on its carrier protein (BCCP) and then the CO(2) group is transferred by the transcarboxylase to acetyl-CoA to form malonyl-CoA. This is Acetyl-coenzyme A carboxylase carboxyl transferase subunit beta from Methylococcus capsulatus (strain ATCC 33009 / NCIMB 11132 / Bath).